The following is a 340-amino-acid chain: L-threonine 3-dehydrogenase (340 aa).

Cys38 is a binding site for Zn(2+). Residues Thr40 and His43 each act as charge relay system in the active site. 6 residues coordinate Zn(2+): His63, Glu64, Cys93, Cys96, Cys99, and Cys107. NAD(+) is bound by residues Ile175, Asp195, Arg200, 262–264 (LGI), and 286–287 (IY).

Belongs to the zinc-containing alcohol dehydrogenase family. In terms of assembly, homotetramer. It depends on Zn(2+) as a cofactor.

Its subcellular location is the cytoplasm. It catalyses the reaction L-threonine + NAD(+) = (2S)-2-amino-3-oxobutanoate + NADH + H(+). Its pathway is amino-acid degradation; L-threonine degradation via oxydo-reductase pathway; glycine from L-threonine: step 1/2. Functionally, catalyzes the NAD(+)-dependent oxidation of L-threonine to 2-amino-3-ketobutyrate. The sequence is that of L-threonine 3-dehydrogenase from Pseudoalteromonas atlantica (strain T6c / ATCC BAA-1087).